The primary structure comprises 602 residues: Elongation factor 4 (602 aa).

The region spanning 7-189 is the tr-type G domain; sequence SKIRNFCIIA…AIVRRVPPPQ (183 aa). Residues 19-24 and 136-139 contribute to the GTP site; these read DHGKST and NKVD.

The protein belongs to the TRAFAC class translation factor GTPase superfamily. Classic translation factor GTPase family. LepA subfamily.

The protein resides in the cell inner membrane. The enzyme catalyses GTP + H2O = GDP + phosphate + H(+). Functionally, required for accurate and efficient protein synthesis under certain stress conditions. May act as a fidelity factor of the translation reaction, by catalyzing a one-codon backward translocation of tRNAs on improperly translocated ribosomes. Back-translocation proceeds from a post-translocation (POST) complex to a pre-translocation (PRE) complex, thus giving elongation factor G a second chance to translocate the tRNAs correctly. Binds to ribosomes in a GTP-dependent manner. The polypeptide is Elongation factor 4 (Prochlorococcus marinus (strain MIT 9301)).